Reading from the N-terminus, the 63-residue chain is Large ribosomal subunit protein bL28 (63 aa).

It belongs to the bacterial ribosomal protein bL28 family.

The chain is Large ribosomal subunit protein bL28 from Brachyspira hyodysenteriae (strain ATCC 49526 / WA1).